The following is a 170-amino-acid chain: Photosystem II extrinsic protein V (170 aa).

Positions 1-33 are cleaved as a signal peptide; sequence MASVFSSLRRSLKGLLVLIPVLIGLAVTSPAQA. Heme c contacts are provided by Cys70, Cys73, His74, and His125.

The protein belongs to the cytochrome c family. PsbV subfamily. As to quaternary structure, PSII is composed of 1 copy each of membrane proteins PsbA, PsbB, PsbC, PsbD, PsbE, PsbF, PsbH, PsbI, PsbJ, PsbK, PsbL, PsbM, PsbT, PsbX, PsbY, PsbZ, Psb30/Ycf12, peripheral proteins PsbO, CyanoQ (PsbQ), PsbU, PsbV and a large number of cofactors. It forms dimeric complexes. Requires heme c as cofactor.

Its subcellular location is the cellular thylakoid membrane. Its function is as follows. One of the extrinsic, lumenal subunits of photosystem II (PSII). PSII is a light-driven water plastoquinone oxidoreductase, using light energy to abstract electrons from H(2)O, generating a proton gradient subsequently used for ATP formation. The extrinsic proteins stabilize the structure of photosystem II oxygen-evolving complex (OEC), the ion environment of oxygen evolution and protect the OEC against heat-induced inactivation. Low-potential cytochrome c that plays a role in the OEC of PSII. This is Photosystem II extrinsic protein V from Synechococcus sp. (strain CC9605).